Reading from the N-terminus, the 214-residue chain is Dephospho-CoA kinase (214 aa).

The region spanning K3–A202 is the DPCK domain. ATP is bound at residue G11 to R16.

The protein belongs to the CoaE family.

It is found in the cytoplasm. It catalyses the reaction 3'-dephospho-CoA + ATP = ADP + CoA + H(+). The protein operates within cofactor biosynthesis; coenzyme A biosynthesis; CoA from (R)-pantothenate: step 5/5. Its function is as follows. Catalyzes the phosphorylation of the 3'-hydroxyl group of dephosphocoenzyme A to form coenzyme A. This Bordetella bronchiseptica (strain ATCC BAA-588 / NCTC 13252 / RB50) (Alcaligenes bronchisepticus) protein is Dephospho-CoA kinase.